The sequence spans 126 residues: Histone H2B type 1-K (126 aa).

A compositionally biased stretch (low complexity) spans 1–12 (MPEPAKSAPAPK). A disordered region spans residues 1–36 (MPEPAKSAPAPKKGSKKAVTKAQKKDGKKRKRSRKE). Residue P2 is modified to N-acetylproline. An ADP-ribosyl glutamic acid modification is found at E3. The residue at position 6 (K6) is an N6-(2-hydroxyisobutyryl)lysine; alternate. K6 is modified (N6-(beta-hydroxybutyryl)lysine; alternate). K6 carries the N6-acetyllysine; alternate modification. N6-butyryllysine; alternate is present on K6. Residue K6 is modified to N6-crotonyllysine; alternate. K6 bears the N6-lactoyllysine; alternate mark. K6 participates in a covalent cross-link: Glycyl lysine isopeptide (Lys-Gly) (interchain with G-Cter in SUMO2); alternate. S7 is modified (ADP-ribosylserine). N6-(beta-hydroxybutyryl)lysine; alternate is present on K12. N6-acetyllysine; alternate occurs at positions 12 and 13. K12 and K13 each carry N6-crotonyllysine; alternate. K12 is subject to N6-lactoyllysine; alternate. K13 is subject to N6-(2-hydroxyisobutyryl)lysine; alternate. At S15 the chain carries Phosphoserine; by STK4/MST1. N6-acetyllysine; alternate occurs at positions 16, 17, 21, and 24. K16, K17, K21, and K24 each carry N6-crotonyllysine; alternate. N6-lactoyllysine; alternate is present on residues K16, K17, K21, and K24. At K17 the chain carries N6-glutaryllysine; alternate. K21 and K24 each carry N6-(2-hydroxyisobutyryl)lysine; alternate. Residue K21 is modified to N6-(beta-hydroxybutyryl)lysine; alternate. K21 carries the post-translational modification N6-butyryllysine; alternate. K21 is covalently cross-linked (Glycyl lysine isopeptide (Lys-Gly) (interchain with G-Cter in SUMO2); alternate). K25 carries the N6-(2-hydroxyisobutyryl)lysine modification. The residue at position 35 (K35) is an N6-(2-hydroxyisobutyryl)lysine; alternate. Position 35 is an N6-(beta-hydroxybutyryl)lysine; alternate (K35). An N6-crotonyllysine; alternate modification is found at K35. N6-glutaryllysine; alternate is present on K35. The residue at position 35 (K35) is an N6-succinyllysine; alternate. K35 participates in a covalent cross-link: Glycyl lysine isopeptide (Lys-Gly) (interchain with G-Cter in ubiquitin); alternate. E36 is modified (polyADP-ribosyl glutamic acid). Position 37 is a phosphoserine; by AMPK (S37). N6-(2-hydroxyisobutyryl)lysine; alternate is present on residues K44, K47, and K58. N6-lactoyllysine; alternate is present on K44. An N6-glutaryllysine; alternate mark is found at K44 and K47. Position 47 is an N6-methyllysine; alternate (K47). At K58 the chain carries N6,N6-dimethyllysine; alternate. R80 carries the dimethylated arginine modification. K86 bears the N6-(2-hydroxyisobutyryl)lysine; alternate mark. Residue K86 is modified to N6-acetyllysine; alternate. An N6-lactoyllysine; alternate modification is found at K86. K86 carries the N6,N6,N6-trimethyllysine; alternate modification. Omega-N-methylarginine is present on residues R87 and R93. The residue at position 109 (K109) is an N6-(2-hydroxyisobutyryl)lysine; alternate. K109 bears the N6-(beta-hydroxybutyryl)lysine; alternate mark. At K109 the chain carries N6-lactoyllysine; alternate. K109 is modified (N6-glutaryllysine; alternate). Position 109 is an N6-methyllysine; alternate (K109). O-linked (GlcNAc) serine glycosylation is present at S113. T116 is modified (phosphothreonine). N6-(2-hydroxyisobutyryl)lysine; alternate occurs at positions 117 and 121. Position 117 is an N6-(beta-hydroxybutyryl)lysine; alternate (K117). N6-lactoyllysine; alternate is present on residues K117 and K121. N6-glutaryllysine; alternate is present on residues K117 and K121. N6-succinyllysine; alternate occurs at positions 117 and 121. N6-methylated lysine; alternate is present on K117. K121 participates in a covalent cross-link: Glycyl lysine isopeptide (Lys-Gly) (interchain with G-Cter in ubiquitin); alternate.

Belongs to the histone H2B family. The nucleosome is a histone octamer containing two molecules each of H2A, H2B, H3 and H4 assembled in one H3-H4 heterotetramer and two H2A-H2B heterodimers. The octamer wraps approximately 147 bp of DNA. Post-translationally, monoubiquitination at Lys-35 (H2BK34Ub) by the MSL1/MSL2 dimer is required for histone H3 'Lys-4' (H3K4me) and 'Lys-79' (H3K79me) methylation and transcription activation at specific gene loci, such as HOXA9 and MEIS1 loci. Similarly, monoubiquitination at Lys-121 (H2BK120Ub) by the RNF20/40 complex gives a specific tag for epigenetic transcriptional activation and is also prerequisite for histone H3 'Lys-4' and 'Lys-79' methylation. It also functions cooperatively with the FACT dimer to stimulate elongation by RNA polymerase II. H2BK120Ub also acts as a regulator of mRNA splicing: deubiquitination by USP49 is required for efficient cotranscriptional splicing of a large set of exons. Phosphorylated on Ser-15 (H2BS14ph) by STK4/MST1 during apoptosis; which facilitates apoptotic chromatin condensation. Also phosphorylated on Ser-15 in response to DNA double strand breaks (DSBs), and in correlation with somatic hypermutation and immunoglobulin class-switch recombination. Phosphorylation at Ser-37 (H2BS36ph) by AMPK in response to stress promotes transcription. In terms of processing, glcNAcylation at Ser-113 promotes monoubiquitination of Lys-121. It fluctuates in response to extracellular glucose, and associates with transcribed genes. Post-translationally, ADP-ribosylated by PARP1 or PARP2 on Ser-7 (H2BS6ADPr) in response to DNA damage. H2BS6ADPr promotes recruitment of CHD1L. Mono-ADP-ribosylated on Glu-3 (H2BE2ADPr) by PARP3 in response to single-strand breaks. Poly ADP-ribosylation on Glu-36 (H2BE35ADPr) by PARP1 regulates adipogenesis: it inhibits phosphorylation at Ser-37 (H2BS36ph), thereby blocking expression of pro-adipogenetic genes. Crotonylation (Kcr) is specifically present in male germ cells and marks testis-specific genes in post-meiotic cells, including X-linked genes that escape sex chromosome inactivation in haploid cells. Crotonylation marks active promoters and enhancers and confers resistance to transcriptional repressors. It is also associated with post-meiotically activated genes on autosomes. In terms of processing, hydroxybutyrylation of histones is induced by starvation. Post-translationally, lactylated in macrophages by EP300/P300 by using lactoyl-CoA directly derived from endogenous or exogenous lactate, leading to stimulates gene transcription.

The protein resides in the nucleus. It is found in the chromosome. Its function is as follows. Core component of nucleosome. Nucleosomes wrap and compact DNA into chromatin, limiting DNA accessibility to the cellular machineries which require DNA as a template. Histones thereby play a central role in transcription regulation, DNA repair, DNA replication and chromosomal stability. DNA accessibility is regulated via a complex set of post-translational modifications of histones, also called histone code, and nucleosome remodeling. The sequence is that of Histone H2B type 1-K from Mus musculus (Mouse).